The chain runs to 403 residues: Calcium-responsive transactivator (403 aa).

Positions 1–148 (MSVAFASARP…TLPTTTMSMA (148 aa)) are N-terminal auto-inhibitory domain. An SH2-binding motif is present at residues 50 to 53 (YQQI). Disordered regions lie at residues 72–111 (QSLL…ALGS), 152–171 (HGSA…VPMQ), 224–303 (NQSS…RTFE), and 318–403 (SQQQ…NYQQ). 2 stretches are compositionally biased toward polar residues: residues 92 to 105 (QTGP…QGNL) and 161 to 171 (TVPSSQNVPMQ). Residues 149-238 (VSTHGSAPGY…GSSMMGQRPL (90 aa)) form a methionine-rich intra-molecular domain region. Positions 224–235 (NQSSQGSSMMGQ) are enriched in low complexity. The interval 252–324 (YLGQEEYYSE…AQYSQQQTGY (73 aa)) is MFD domain. Over residues 263–277 (YGHSQGSSEAMTPQY) the composition is skewed to polar residues. Low complexity predominate over residues 286–296 (YSYQQSSYGEQ). Positions 341-403 (NQQNYPGQQQ…EQGQYGNYQQ (63 aa)) are necessary for nuclear localization. An SH2-binding motif is present at residues 360 to 363 (SQYS). An SH3-binding motif is present at residues 378–386 (TSQTTSTAQ). The SH2-binding motif lies at 398 to 401 (YGNY).

The protein belongs to the SS18 family. As to quaternary structure, homodimer.

The protein resides in the nucleus. Functionally, transcriptional activator which may be required for calcium-dependent dendritic growth and branching in cortical neurons. This chain is Calcium-responsive transactivator (ss18l1), found in Xenopus laevis (African clawed frog).